The following is a 481-amino-acid chain: Aspartyl/glutamyl-tRNA(Asn/Gln) amidotransferase subunit B (481 aa).

It belongs to the GatB/GatE family. GatB subfamily. As to quaternary structure, heterotrimer of A, B and C subunits.

The enzyme catalyses L-glutamyl-tRNA(Gln) + L-glutamine + ATP + H2O = L-glutaminyl-tRNA(Gln) + L-glutamate + ADP + phosphate + H(+). The catalysed reaction is L-aspartyl-tRNA(Asn) + L-glutamine + ATP + H2O = L-asparaginyl-tRNA(Asn) + L-glutamate + ADP + phosphate + 2 H(+). Allows the formation of correctly charged Asn-tRNA(Asn) or Gln-tRNA(Gln) through the transamidation of misacylated Asp-tRNA(Asn) or Glu-tRNA(Gln) in organisms which lack either or both of asparaginyl-tRNA or glutaminyl-tRNA synthetases. The reaction takes place in the presence of glutamine and ATP through an activated phospho-Asp-tRNA(Asn) or phospho-Glu-tRNA(Gln). The chain is Aspartyl/glutamyl-tRNA(Asn/Gln) amidotransferase subunit B from Teredinibacter turnerae (strain ATCC 39867 / T7901).